A 198-amino-acid chain; its full sequence is Recombination protein RecR (198 aa).

The C4-type zinc finger occupies 57-72; sequence CSVCGNLTDEDPCAIC. A Toprim domain is found at 80 to 175; the sequence is STILIVEDSR…KVTRLARGLA (96 aa).

It belongs to the RecR family.

May play a role in DNA repair. It seems to be involved in an RecBC-independent recombinational process of DNA repair. It may act with RecF and RecO. The protein is Recombination protein RecR of Streptococcus sanguinis (strain SK36).